Reading from the N-terminus, the 558-residue chain is Receptor-like kinase LIP2 (558 aa).

The tract at residues 1–45 is disordered; sequence MHCFPCFSSPKNKKSSTTNETNDNNEPKPDDRRRAEETEEIEQSE. The segment covering 15–24 has biased composition (low complexity); it reads SSTTNETNDN. The segment covering 25–36 has biased composition (basic and acidic residues); the sequence is NEPKPDDRRRAE. Residue Thr-53 is modified to Phosphothreonine. In terms of domain architecture, Protein kinase spans 64–343; sequence FRQECLLGEG…SDVMVALSFL (280 aa). ATP contacts are provided by residues 70 to 78 and Lys-93; that span reads LGEGGFGRV. At Tyr-138 the chain carries Phosphotyrosine. Asp-191 serves as the catalytic Proton acceptor. 2 positions are modified to phosphoserine: Ser-195 and Ser-227. Thr-233 is modified (phosphothreonine). Phosphotyrosine is present on Tyr-241. The tract at residues 372–558 is disordered; it reads HDSNLVSPPP…SDVAIDSIKE (187 aa). The span at 401–418 shows a compositional bias: basic and acidic residues; sequence ESEKESVSKNEYKKKHEE. Over residues 419-431 the composition is skewed to acidic residues; it reads EDSSMESDDESDS. Over residues 432-448 the composition is skewed to basic and acidic residues; that stretch reads NSEHEKDQPPKPIDEKN. Low complexity predominate over residues 473–486; sequence SKSSQKSNDESTSS. Composition is skewed to basic and acidic residues over residues 488 to 500, 508 to 524, and 547 to 558; these read YDSD…KGKE, EEKH…KTDD, and IKSDVAIDSIKE.

Belongs to the protein kinase superfamily. Ser/Thr protein kinase family. As to quaternary structure, interacts with PRK6. Post-translationally, palmitoylated. In terms of tissue distribution, expressed in mature pollen and in germinating pollen tubes.

The protein resides in the cell membrane. Functionally, involved in pollen tube guidance into micropyle. Participates in perception of the ovule-secreted peptide signal LURE1. This is Receptor-like kinase LIP2 from Arabidopsis thaliana (Mouse-ear cress).